The sequence spans 220 residues: Imidazoleglycerol-phosphate dehydratase (220 aa).

The protein belongs to the imidazoleglycerol-phosphate dehydratase family.

It carries out the reaction D-erythro-1-(imidazol-4-yl)glycerol 3-phosphate = 3-(imidazol-4-yl)-2-oxopropyl phosphate + H2O. It functions in the pathway amino-acid biosynthesis; L-histidine biosynthesis; L-histidine from 5-phospho-alpha-D-ribose 1-diphosphate: step 6/9. The sequence is that of Imidazoleglycerol-phosphate dehydratase (HIS3) from Eremothecium gossypii (strain ATCC 10895 / CBS 109.51 / FGSC 9923 / NRRL Y-1056) (Yeast).